The following is a 517-amino-acid chain: Ribonuclease Y (517 aa).

Residues 1-21 (MIEFLIGLIAAVVGILVGYLI) form a helical membrane-spanning segment. Residues 207–271 (LINVVNIKND…IAVRTVELLV (65 aa)) enclose the KH domain. Positions 333 to 426 (ALIHSLEVAH…VCTADVLSAA (94 aa)) constitute an HD domain.

This sequence belongs to the RNase Y family.

The protein resides in the cell membrane. In terms of biological role, endoribonuclease that initiates mRNA decay. The sequence is that of Ribonuclease Y from Campylobacter hominis (strain ATCC BAA-381 / DSM 21671 / CCUG 45161 / LMG 19568 / NCTC 13146 / CH001A).